Consider the following 187-residue polypeptide: UPF0301 protein PMI0339 (187 aa).

The protein belongs to the UPF0301 (AlgH) family.

The chain is UPF0301 protein PMI0339 from Proteus mirabilis (strain HI4320).